A 743-amino-acid polypeptide reads, in one-letter code: Myb-related protein B (743 aa).

Residues 1–29 (MSRRSRGDDLEDLQYQDTDSDVPEPKENR) are disordered. Over residues 9–22 (DLEDLQYQDTDSDV) the composition is skewed to acidic residues. HTH myb-type domains lie at 26–77 (KENR…LRVL), 78–133 (HPDL…NPEV), and 134–184 (KKSS…KRKV). 3 DNA-binding regions (H-T-H motif) span residues 54-77 (WKTIASNLNNRTEQQCQHRWLRVL), 106-129 (WTLIAKQLRGRMGKQCRERWHNHL), and 157-180 (WAEIAKLLPGRTDNAVKNHWNSTI). Disordered stretches follow at residues 221-262 (VERS…SESA) and 381-406 (VTENGGSITTSVTEANSMTPKSTPVK).

As to quaternary structure, component of the DREAM complex.

Its subcellular location is the nucleus. This Xenopus laevis (African clawed frog) protein is Myb-related protein B (mybl2).